The following is a 351-amino-acid chain: Hydroxymethylglutaryl-CoA synthase (351 aa).

Residue aspartate 30 participates in (3S)-3-hydroxy-3-methylglutaryl-CoA binding. Glutamate 82 acts as the Proton donor/acceptor in catalysis. (3S)-3-hydroxy-3-methylglutaryl-CoA is bound by residues cysteine 114, serine 155, threonine 203, and histidine 236. The Acyl-thioester intermediate role is filled by cysteine 114. Residue histidine 236 is the Proton donor/acceptor of the active site. Arginine 241 is a binding site for CoA. Residues arginine 245, asparagine 268, and serine 298 each contribute to the (3S)-3-hydroxy-3-methylglutaryl-CoA site.

It belongs to the thiolase-like superfamily. Archaeal HMG-CoA synthase family. Interacts with acetoacetyl-CoA thiolase that catalyzes the precedent step in the pathway and with a DUF35 protein. The acetoacetyl-CoA thiolase/HMG-CoA synthase complex channels the intermediate via a fused CoA-binding site, which allows for efficient coupling of the endergonic thiolase reaction with the exergonic HMGCS reaction.

The catalysed reaction is acetoacetyl-CoA + acetyl-CoA + H2O = (3S)-3-hydroxy-3-methylglutaryl-CoA + CoA + H(+). Its pathway is metabolic intermediate biosynthesis; (R)-mevalonate biosynthesis; (R)-mevalonate from acetyl-CoA: step 2/3. In terms of biological role, catalyzes the condensation of acetyl-CoA with acetoacetyl-CoA to form 3-hydroxy-3-methylglutaryl-CoA (HMG-CoA). Functions in the mevalonate (MVA) pathway leading to isopentenyl diphosphate (IPP), a key precursor for the biosynthesis of isoprenoid compounds that are building blocks of archaeal membrane lipids. The polypeptide is Hydroxymethylglutaryl-CoA synthase (Pyrobaculum neutrophilum (strain DSM 2338 / JCM 9278 / NBRC 100436 / V24Sta) (Thermoproteus neutrophilus)).